The following is a 310-amino-acid chain: Protein translocase subunit SecF (310 aa).

The next 6 membrane-spanning stretches (helical) occupy residues 20 to 42 (FKKV…IGIY), 140 to 160 (IEAG…YIWV), 164 to 184 (WYFG…ALGF), 194 to 214 (LSTI…SVVI), 246 to 266 (ILTV…GGEA), and 272 to 292 (VLVF…SAPI).

The protein belongs to the SecD/SecF family. SecF subfamily. Forms a complex with SecD. Part of the essential Sec protein translocation apparatus which comprises SecA, SecYEG and auxiliary proteins SecDF-YajC and YidC.

It is found in the cell inner membrane. Its function is as follows. Part of the Sec protein translocase complex. Interacts with the SecYEG preprotein conducting channel. SecDF uses the proton motive force (PMF) to complete protein translocation after the ATP-dependent function of SecA. This is Protein translocase subunit SecF from Rickettsia canadensis (strain McKiel).